A 55-amino-acid polypeptide reads, in one-letter code: Sporulation killing factor (55 aa).

The propeptide occupies 1–29; it reads MKRNQKEWESVSKKGLMKPGGTSIVKAAG. C30 and C45 are disulfide-bonded. Residues 30-55 constitute a cross-link (cyclopeptide (Cys-Ile)); that stretch reads CMGCWASKSIAMTRVCALPHPAMRAI. The 2-(S-cysteinyl)-methionine (Cys-Met) cross-link spans 33-41; that stretch reads CWASKSIAM.

In terms of processing, this is a cyclic peptide. The first step in SKF maturation is probably thioether bond formation.

Its subcellular location is the secreted. Functionally, produces a 26-residue extracellular sporulation killing factor (SKF) that induces the lysis of other B.subtilis cells that have not entered the sporulation pathway, providing a source of nutrients to support sporulation, and at the same time delaying commitment to the energetically expensive and irreversible onset of sporulation. Can also inhibit growth of other bacteria at high concentrations. Addition of SKF to solid cultures induces killing, but it is much less effective than SDP (AC O34344). Has a role in protecting the secreted lipase LipA against proteolysis, either by modulating its folding or by acting as a protease inhibitor. In Bacillus subtilis (strain 168), this protein is Sporulation killing factor.